The sequence spans 481 residues: Probable squalene synthase (481 aa).

The next 2 membrane-spanning stretches (helical) occupy residues 294 to 314 and 416 to 436; these read SVFN…ELVF and FLVL…IGAA.

It belongs to the phytoene/squalene synthase family. Requires Mg(2+) as cofactor.

It localises to the endoplasmic reticulum membrane. It catalyses the reaction 2 (2E,6E)-farnesyl diphosphate + NADPH + H(+) = squalene + 2 diphosphate + NADP(+). The enzyme catalyses 2 (2E,6E)-farnesyl diphosphate + NADH + H(+) = squalene + 2 diphosphate + NAD(+). It participates in terpene metabolism; lanosterol biosynthesis; lanosterol from farnesyl diphosphate: step 1/3. Functionally, catalyzes the condensation of 2 two farnesyl pyrophosphate moieties to form squalene. It is the first committed enzyme of the sterol biosynthesis pathway. Required for the biosynthesis of ergosterol. The protein is Probable squalene synthase (erg-6) of Neurospora crassa (strain ATCC 24698 / 74-OR23-1A / CBS 708.71 / DSM 1257 / FGSC 987).